We begin with the raw amino-acid sequence, 222 residues long: Eukaryotic translation initiation factor 3 subunit K (222 aa).

In terms of domain architecture, PCI spans 46–208; the sequence is YDLEANLAVL…KIKTKNITEK (163 aa).

Belongs to the eIF-3 subunit K family. As to quaternary structure, component of the eukaryotic translation initiation factor 3 (eIF-3) complex. The eIF-3 complex interacts with pix.

It is found in the cytoplasm. Functionally, component of the eukaryotic translation initiation factor 3 (eIF-3) complex, which is involved in protein synthesis of a specialized repertoire of mRNAs and, together with other initiation factors, stimulates binding of mRNA and methionyl-tRNAi to the 40S ribosome. The eIF-3 complex specifically targets and initiates translation of a subset of mRNAs involved in cell proliferation. The polypeptide is Eukaryotic translation initiation factor 3 subunit K (Drosophila yakuba (Fruit fly)).